The following is a 487-amino-acid chain: MAGTNALLMLENFIDGKFLPCSSYIDSYDPSTGEVYCRVPNSGKDEIEAAVKAAREAFPSWSSRSPQERSRVLNQVADLLEQSLEEFAQAESKDQGKTLALARTMDIPRSVQNFRFFASSSLHHTSECTQMDHLGCMHYTVRAPVGVAGLISPWNLPLYLLTWKIAPAMAAGNTVIAKPSELTSVTAWMLCKLLDKAGVPPGVVNIVFGTGPRVGEALVSHPEVPLISFTGSQPTAERITQLSAPHCKKLSLELGGKNPAIIFEDANLDECIPATVRSSFANQGEICLCTSRIFVQKSIYSEFLKRFVEATRKWKVGIPSDPLVSIGALISKAHLEKVRSYVKRALAEGAQIWCGEGVDKLSLPARNQAGYFMLPTVITDIKDESCCMTEEIFGPVTCVVPFDSEEEVIERANNVKYGLAATVWSSNVGRVHRVAKKLQSGLVWTNCWLIRELNLPFGGMKSSGIGREGAKDSYDFFTEIKTITVKH.

An NAD(+)-binding site is contributed by 209–215; sequence GTGPRVG. Residue E253 is the Proton acceptor of the active site. Catalysis depends on C287, which acts as the Nucleophile. Residue S362 is modified to Phosphoserine.

This sequence belongs to the aldehyde dehydrogenase family. In terms of tissue distribution, highly expressed in adult kidney and liver. Detected at lower levels in fetal liver and kidney.

The protein localises to the cytoplasm. The catalysed reaction is 2-aminomuconate 6-semialdehyde + NAD(+) + H2O = (2Z,4E)-2-aminomuconate + NADH + 2 H(+). It participates in amino-acid degradation; L-kynurenine degradation. In terms of biological role, catalyzes the NAD-dependent oxidation of 2-aminomuconic semialdehyde of the kynurenine metabolic pathway in L-tryptophan degradation. This chain is 2-aminomuconic semialdehyde dehydrogenase, found in Homo sapiens (Human).